The sequence spans 345 residues: uncharacterized protein (345 aa).

Residues 1-198 (MDVLSAVLLA…LSEGLLDHEE (198 aa)) form the CNNM transmembrane domain. 2 helical membrane passes run 3–23 (VLSAVLLALLLIGANAFFVGA) and 95–115 (VPPALLHTLSLAIVVALHVLL). CBS domains follow at residues 217-280 (AVPL…PQTV) and 285-342 (VVRP…MRDG). The helical transmembrane segment at 312–332 (LALVTADNGSVVGMVALEDVV) threads the bilayer.

It belongs to the TerC family.

Its subcellular location is the cell membrane. This is an uncharacterized protein from Mycobacterium tuberculosis (strain CDC 1551 / Oshkosh).